Consider the following 86-residue polypeptide: MANNKSAKKRAIQAEKRRQHNASRRSMMRTYMKKTVAAIAAGDKEAATAAFAVVTPILDRMATKGLIHKNKAARHKSRFAAQIKAL.

Residues 1–27 (MANNKSAKKRAIQAEKRRQHNASRRSM) form a disordered region.

It belongs to the bacterial ribosomal protein bS20 family.

In terms of biological role, binds directly to 16S ribosomal RNA. In Vibrio vulnificus (strain CMCP6), this protein is Small ribosomal subunit protein bS20.